We begin with the raw amino-acid sequence, 493 residues long: Glutamyl-tRNA(Gln) amidotransferase subunit A (493 aa).

Active-site charge relay system residues include Lys78 and Ser158. The active-site Acyl-ester intermediate is Ser182.

Belongs to the amidase family. GatA subfamily. Heterotrimer of A, B and C subunits.

It carries out the reaction L-glutamyl-tRNA(Gln) + L-glutamine + ATP + H2O = L-glutaminyl-tRNA(Gln) + L-glutamate + ADP + phosphate + H(+). Allows the formation of correctly charged Gln-tRNA(Gln) through the transamidation of misacylated Glu-tRNA(Gln) in organisms which lack glutaminyl-tRNA synthetase. The reaction takes place in the presence of glutamine and ATP through an activated gamma-phospho-Glu-tRNA(Gln). This chain is Glutamyl-tRNA(Gln) amidotransferase subunit A, found in Methylorubrum populi (strain ATCC BAA-705 / NCIMB 13946 / BJ001) (Methylobacterium populi).